The following is a 266-amino-acid chain: HLA class II histocompatibility antigen, DR beta 5 chain (266 aa).

The first 29 residues, 1 to 29, serve as a signal peptide directing secretion; the sequence is MVCLKLPGGSYMAKLTVTLMVLSSPLALA. The interval 30–124 is beta-1; sequence GDTRPRFLQQ…GESFTVQRRV (95 aa). At 30–227 the chain is on the extracellular side; the sequence is GDTRPRFLQQ…RAQSESAQSK (198 aa). 2 disulfide bridges follow: C44–C108 and C146–C202. N48 carries N-linked (GlcNAc...) asparagine glycosylation. Residues 125–227 are beta-2; the sequence is EPKVTVYPAR…RAQSESAQSK (103 aa). The Ig-like C1-type domain occupies 126-214; the sequence is PKVTVYPART…EHPSVTSPLT (89 aa). A helical transmembrane segment spans residues 228–248; that stretch reads MLSGVGGFVLGLLFLGAGLFI. Over 249-266 the chain is Cytoplasmic; the sequence is YFKNQKGHSGLHPTGLVS.

Belongs to the MHC class II family. In terms of assembly, heterodimer of an alpha and a beta subunit; also referred as MHC class II molecule. In the endoplasmic reticulum (ER) it forms a heterononamer; 3 MHC class II molecules bind to a CD74 homotrimer (also known as invariant chain or HLA class II histocompatibility antigen gamma chain). In the endosomal/lysosomal system; CD74 undergoes sequential degradation by various proteases; leaving a small fragment termed CLIP on each MHC class II molecule. MHC class II molecule interacts with HLA_DM, and HLA_DO in B-cells, in order to release CLIP and facilitate the binding of antigenic peptides. Ubiquitinated by MARCH1 and MARCH8 at Lys-254 leading to down-regulation of MHC class II.

Its subcellular location is the cell membrane. The protein resides in the endoplasmic reticulum membrane. The protein localises to the golgi apparatus. It localises to the trans-Golgi network membrane. It is found in the endosome membrane. Its subcellular location is the lysosome membrane. The protein resides in the late endosome membrane. Functionally, binds peptides derived from antigens that access the endocytic route of antigen presenting cells (APC) and presents them on the cell surface for recognition by the CD4 T-cells. The peptide binding cleft accommodates peptides of 10-30 residues. The peptides presented by MHC class II molecules are generated mostly by degradation of proteins that access the endocytic route, where they are processed by lysosomal proteases and other hydrolases. Exogenous antigens that have been endocytosed by the APC are thus readily available for presentation via MHC II molecules, and for this reason this antigen presentation pathway is usually referred to as exogenous. As membrane proteins on their way to degradation in lysosomes as part of their normal turn-over are also contained in the endosomal/lysosomal compartments, exogenous antigens must compete with those derived from endogenous components. Autophagy is also a source of endogenous peptides, autophagosomes constitutively fuse with MHC class II loading compartments. In addition to APCs, other cells of the gastrointestinal tract, such as epithelial cells, express MHC class II molecules and CD74 and act as APCs, which is an unusual trait of the GI tract. To produce a MHC class II molecule that presents an antigen, three MHC class II molecules (heterodimers of an alpha and a beta chain) associate with a CD74 trimer in the ER to form a heterononamer. Soon after the entry of this complex into the endosomal/lysosomal system where antigen processing occurs, CD74 undergoes a sequential degradation by various proteases, including CTSS and CTSL, leaving a small fragment termed CLIP (class-II-associated invariant chain peptide). The removal of CLIP is facilitated by HLA-DM via direct binding to the alpha-beta-CLIP complex so that CLIP is released. HLA-DM stabilizes MHC class II molecules until primary high affinity antigenic peptides are bound. The MHC II molecule bound to a peptide is then transported to the cell membrane surface. In B-cells, the interaction between HLA-DM and MHC class II molecules is regulated by HLA-DO. Primary dendritic cells (DCs) also to express HLA-DO. Lysosomal microenvironment has been implicated in the regulation of antigen loading into MHC II molecules, increased acidification produces increased proteolysis and efficient peptide loading. The chain is HLA class II histocompatibility antigen, DR beta 5 chain from Homo sapiens (Human).